Consider the following 101-residue polypeptide: Cilia- and flagella-associated protein 141 (101 aa).

As to quaternary structure, microtubule inner protein component of sperm flagellar doublet microtubules.

The protein localises to the cytoplasm. It is found in the cytoskeleton. The protein resides in the cilium axoneme. It localises to the flagellum axoneme. In terms of biological role, microtubule inner protein (MIP) part of the dynein-decorated doublet microtubules (DMTs) in cilia axoneme, which is required for motile cilia beating. In Mus musculus (Mouse), this protein is Cilia- and flagella-associated protein 141.